A 639-amino-acid polypeptide reads, in one-letter code: MSSTMFVKRNPIRETTAGKISSPSSPTLNVAVAHIRAGSYYEIDASILPQRSPENLKSIRVVMVSKITASDVSLRYPSMFSLRSHFDYSRMNRNKPMKKRSGGGLLPVFDESHVMASELAGDLLYRRIAPHELSMNRNSWGFWVSSSSRRNKFPRREVVSQPAYNTRLCRAASPEGKCSSELKSGGMIKWGRRLRVQYQSRHIDTRKNKEGEESSRVKDEVYKEEEMEKEEDDDDGNEIGGTKQEAKEITNGNRKRKLIESSTERLAQKAKVYDQKKETQIVVYKRKSERKFIDRWSVERYKLAERNMLKVMKEKNAVFGNSILRPELRSEARKLIGDTGLLDHLLKHMAGKVAPGGQDRFMRKHNADGAMEYWLESSDLIHIRKEAGVKDPYWTPPPGWKLGDNPSQDPVCAGEIRDIREELASLKRELKKLASKKEEEELVIMTTPNSCVTSQNDNLMTPAKEIYADLLKKKYKIEDQLVIIGETLRKMEEDMGWLKKTVDENYPKKPDSTETPLLLEDSPPIQTLEGEVKVVNKGNQITESPQNREKGRKHDQQERSPLSLISNTGFRICRPVGMFAWPQLPALAAATDTNASSPSHRQAYPSPFPVKPLAAKRPLGLTFPFTIIPEEAPKNLFNV.

A compositionally biased stretch (basic and acidic residues) spans 201-226; sequence RHIDTRKNKEGEESSRVKDEVYKEEE. The interval 201-256 is disordered; that stretch reads RHIDTRKNKEGEESSRVKDEVYKEEEMEKEEDDDDGNEIGGTKQEAKEITNGNRKR. Residues 227-237 are compositionally biased toward acidic residues; it reads MEKEEDDDDGN. The 148-residue stretch at 351–498 folds into the PI-PLC X-box domain; it reads GKVAPGGQDR…RKMEEDMGWL (148 aa). The tract at residues 536-561 is disordered; that stretch reads NKGNQITESPQNREKGRKHDQQERSP. Basic and acidic residues predominate over residues 546–558; sequence QNREKGRKHDQQE.

As to expression, meiocytes (at protein level).

Its subcellular location is the nucleus. In terms of biological role, required for fertility. Involved in chromatid cohesion establishment, in chromosome structure during male and female meiosis (e.g. the synapse formation between homologous chromosomes, the recombination, and the cohesion of both chromatid arm and centromere), and in axial element formation. Regulates the switch from mitosis to the reductional meiosis division of megaspores prior to the female gametogenesis (megasporogenesis). This is Protein DYAD (DYAD) from Arabidopsis thaliana (Mouse-ear cress).